We begin with the raw amino-acid sequence, 231 residues long: Flagellar L-ring protein (231 aa).

A signal peptide spans 1-18; it reads MKRFVSVVALSGVVSLAG. A lipid anchor (N-palmitoyl cysteine) is attached at Cys-19. A lipid anchor (S-diacylglycerol cysteine) is attached at Cys-19.

This sequence belongs to the FlgH family. In terms of assembly, the basal body constitutes a major portion of the flagellar organelle and consists of four rings (L,P,S, and M) mounted on a central rod.

It localises to the cell outer membrane. The protein localises to the bacterial flagellum basal body. Functionally, assembles around the rod to form the L-ring and probably protects the motor/basal body from shearing forces during rotation. In Pseudomonas fluorescens (strain Pf0-1), this protein is Flagellar L-ring protein.